The sequence spans 478 residues: Glutamyl-tRNA(Gln) amidotransferase subunit A (478 aa).

Residues Lys-72 and Ser-147 each act as charge relay system in the active site. Ser-171 (acyl-ester intermediate) is an active-site residue.

The protein belongs to the amidase family. GatA subfamily. Heterotrimer of A, B and C subunits.

The catalysed reaction is L-glutamyl-tRNA(Gln) + L-glutamine + ATP + H2O = L-glutaminyl-tRNA(Gln) + L-glutamate + ADP + phosphate + H(+). In terms of biological role, allows the formation of correctly charged Gln-tRNA(Gln) through the transamidation of misacylated Glu-tRNA(Gln) in organisms which lack glutaminyl-tRNA synthetase. The reaction takes place in the presence of glutamine and ATP through an activated gamma-phospho-Glu-tRNA(Gln). The sequence is that of Glutamyl-tRNA(Gln) amidotransferase subunit A from Saccharolobus solfataricus (strain ATCC 35092 / DSM 1617 / JCM 11322 / P2) (Sulfolobus solfataricus).